The primary structure comprises 645 residues: 1-deoxy-D-xylulose-5-phosphate synthase 1 (645 aa).

Thiamine diphosphate-binding positions include H79 and 120–122 (GHS). D151 is a Mg(2+) binding site. Thiamine diphosphate is bound by residues 152–153 (GS), N180, Y291, and E373. N180 lines the Mg(2+) pocket.

This sequence belongs to the transketolase family. DXPS subfamily. Homodimer. It depends on Mg(2+) as a cofactor. The cofactor is thiamine diphosphate.

It carries out the reaction D-glyceraldehyde 3-phosphate + pyruvate + H(+) = 1-deoxy-D-xylulose 5-phosphate + CO2. It participates in metabolic intermediate biosynthesis; 1-deoxy-D-xylulose 5-phosphate biosynthesis; 1-deoxy-D-xylulose 5-phosphate from D-glyceraldehyde 3-phosphate and pyruvate: step 1/1. Functionally, catalyzes the acyloin condensation reaction between C atoms 2 and 3 of pyruvate and glyceraldehyde 3-phosphate to yield 1-deoxy-D-xylulose-5-phosphate (DXP). The polypeptide is 1-deoxy-D-xylulose-5-phosphate synthase 1 (Rhodospirillum rubrum (strain ATCC 11170 / ATH 1.1.1 / DSM 467 / LMG 4362 / NCIMB 8255 / S1)).